Consider the following 277-residue polypeptide: MQVVHTIAEARRARAAFDELGFVPTMGYLHQGHLALVERARAECPAVAVSIFVNPTQFGPHEDYARYPRDTARDLALLEAAGVDLVFIPTVEEMYPAGFGTYVIQPAADEVLEGAARPGHFRGVATVVCKLFNIIQPTKSYFGQKDAQQTVVVRQMVRDLNIPVEIVIVPTVREPDGLALSSRNVYLTPEQRAAAPVLYRALRAAAERYAAGERSGEVLRAVMREVLSTEPLAKPEYVSVAHPHTLRELDQIGPEGALLSMAVRFDQVRLIDNWLLL.

26–33 serves as a coordination point for ATP; sequence MGYLHQGH. H33 (proton donor) is an active-site residue. Q57 lines the (R)-pantoate pocket. Q57 is a binding site for beta-alanine. 143–146 serves as a coordination point for ATP; that stretch reads GQKD. Q149 serves as a coordination point for (R)-pantoate. Residues V172 and 180 to 183 contribute to the ATP site; that span reads LSSR.

This sequence belongs to the pantothenate synthetase family. Homodimer.

Its subcellular location is the cytoplasm. The catalysed reaction is (R)-pantoate + beta-alanine + ATP = (R)-pantothenate + AMP + diphosphate + H(+). Its pathway is cofactor biosynthesis; (R)-pantothenate biosynthesis; (R)-pantothenate from (R)-pantoate and beta-alanine: step 1/1. Functionally, catalyzes the condensation of pantoate with beta-alanine in an ATP-dependent reaction via a pantoyl-adenylate intermediate. The polypeptide is Pantothenate synthetase (Chloroflexus aggregans (strain MD-66 / DSM 9485)).